A 291-amino-acid chain; its full sequence is MIKIKVPATSANIGPGFDSLGLALDLFLTLEIHEATTTWQVIHEEPDLPHDITHFIVQAALTLTSNMQPHRLVVKSDIPLARGLGSSSAALLAGLTMANILADLNLSPKEILKQATMLEGHPDNVAPALLGGAISAYYDGHQVYNSSFHIPENIIFTVFIPDYELKTAEARNALPDDFPFKKSIAGSAISNTLIAALANDDWQTAKQLIEKDQFHEQQRHHLVPHLLEIRHIAHQHDVLGTYLSGAGPTVITMAPENEAKILLPALTHLTTSGRTIQCHLNRSGLTITKEE.

79 to 89 (PLARGLGSSSA) provides a ligand contact to ATP.

It belongs to the GHMP kinase family. Homoserine kinase subfamily.

Its subcellular location is the cytoplasm. The catalysed reaction is L-homoserine + ATP = O-phospho-L-homoserine + ADP + H(+). It functions in the pathway amino-acid biosynthesis; L-threonine biosynthesis; L-threonine from L-aspartate: step 4/5. In terms of biological role, catalyzes the ATP-dependent phosphorylation of L-homoserine to L-homoserine phosphate. This Leuconostoc citreum (strain KM20) protein is Homoserine kinase.